Reading from the N-terminus, the 508-residue chain is ATP synthase subunit alpha, mitochondrial (508 aa).

171-178 (GDRQTGKT) is a binding site for ATP.

It belongs to the ATPase alpha/beta chains family. In terms of assembly, F-type ATPases have 2 components, CF(1) - the catalytic core - and CF(0) - the membrane proton channel. CF(1) has five subunits: alpha(3), beta(3), gamma(1), delta(1), epsilon(1). CF(0) has three main subunits: a, b and c.

It is found in the mitochondrion. The protein resides in the mitochondrion inner membrane. Mitochondrial membrane ATP synthase (F(1)F(0) ATP synthase or Complex V) produces ATP from ADP in the presence of a proton gradient across the membrane which is generated by electron transport complexes of the respiratory chain. F-type ATPases consist of two structural domains, F(1) - containing the extramembraneous catalytic core, and F(0) - containing the membrane proton channel, linked together by a central stalk and a peripheral stalk. During catalysis, ATP synthesis in the catalytic domain of F(1) is coupled via a rotary mechanism of the central stalk subunits to proton translocation. Subunits alpha and beta form the catalytic core in F(1). Rotation of the central stalk against the surrounding alpha(3)beta(3) subunits leads to hydrolysis of ATP in three separate catalytic sites on the beta subunits. Subunit alpha does not bear the catalytic high-affinity ATP-binding sites. This chain is ATP synthase subunit alpha, mitochondrial (ATPA), found in Zea mays (Maize).